The following is a 384-amino-acid chain: Putative 8-amino-7-oxononanoate synthase (384 aa).

Residue Arg22 coordinates substrate. 109-110 is a binding site for pyridoxal 5'-phosphate; the sequence is GY. Residue His134 coordinates substrate. Residues Ser182, 207–210, and 236–239 contribute to the pyridoxal 5'-phosphate site; these read DDAH and TLSK. Position 239 is an N6-(pyridoxal phosphate)lysine (Lys239). Thr348 serves as a coordination point for substrate.

The protein belongs to the class-II pyridoxal-phosphate-dependent aminotransferase family. BioF subfamily. In terms of assembly, homodimer. Pyridoxal 5'-phosphate is required as a cofactor.

It catalyses the reaction 6-carboxyhexanoyl-[ACP] + L-alanine + H(+) = (8S)-8-amino-7-oxononanoate + holo-[ACP] + CO2. Its pathway is cofactor biosynthesis; biotin biosynthesis. In terms of biological role, catalyzes the decarboxylative condensation of pimeloyl-[acyl-carrier protein] and L-alanine to produce 8-amino-7-oxononanoate (AON), [acyl-carrier protein], and carbon dioxide. This Caulobacter vibrioides (strain ATCC 19089 / CIP 103742 / CB 15) (Caulobacter crescentus) protein is Putative 8-amino-7-oxononanoate synthase (bioF).